The sequence spans 251 residues: Anamorsin homolog (251 aa).

The N-terminal SAM-like domain stretch occupies residues 1–154 (MINFSNTLVI…AENPDFNKSD (154 aa)). The interval 155–167 (DDNNLVSSDEEIY) is linker. The [2Fe-2S] cluster site is built by C170, C181, C184, and C186. The interval 170–186 (CEDKKKVVNRVCDNCTC) is fe-S binding site A. 4 residues coordinate [4Fe-4S] cluster: C216, C219, C227, and C230. 2 short sequence motifs (cx2C motif) span residues 216–219 (CGNC) and 227–230 (CGSC). The tract at residues 216–230 (CGNCYLGDAFRCGSC) is fe-S binding site B.

It belongs to the anamorsin family. In terms of assembly, monomer. It depends on [2Fe-2S] cluster as a cofactor. Requires [4Fe-4S] cluster as cofactor.

The protein localises to the cytoplasm. The protein resides in the mitochondrion intermembrane space. In terms of biological role, component of the cytosolic iron-sulfur (Fe-S) protein assembly (CIA) machinery. Required for the maturation of extramitochondrial Fe-S proteins. Part of an electron transfer chain functioning in an early step of cytosolic Fe-S biogenesis, facilitating the de novo assembly of a [4Fe-4S] cluster on the cytosolic Fe-S scaffold complex. Electrons are transferred from NADPH via a FAD- and FMN-containing diflavin oxidoreductase. Together with the diflavin oxidoreductase, also required for the assembly of the diferric tyrosyl radical cofactor of ribonucleotide reductase (RNR), probably by providing electrons for reduction during radical cofactor maturation in the catalytic small subunit. This is Anamorsin homolog from Plasmodium yoelii yoelii.